Here is a 366-residue protein sequence, read N- to C-terminus: MAEQLKELAEMVESFGTAPTMGEMPCRTLATKGINGPTAAHVIEEIHTPFNLAYVTFTTGSTAFQNVVGVTHSEIDGRVRASLAAFDMANVERHGKFLVTYAPLVNVFSAEALKIHGLDWFFLQRSSRDAFLLSLCQEKPNVLIGESTFIRSALEDASVLGLSHSIPQGVIAFTAGTPLDLDLLQVAEKHNWKIHDLYGCQEFGWLTLDGVPLRADITLIPSPKGSDFREFVVGGLPMADSFPYAESGHVCNPEGKIITYRRARTNPEYEVIVRETKLSSKETTERVARTILRIKGRVVKVDPALKVSSTKTVLDLVPSVSAEGKSTSESYRIEGDDKTFLFETLIEAQLALQQTAKTDQVWKKTR.

It localises to the cytoplasm. The enzyme catalyses holo-[ACP] + acetate + ATP = acetyl-[ACP] + AMP + diphosphate. Its function is as follows. Acyl-carrier protein (ACP) acetate ligase of the biotin-dependent malonate decarboxylase multienzyme complex (EC 7.2.4.4). Involved in the conversion of the thiol group of the ACP-bound 2'-(5-phosphoribosyl)-3'-dephospho-CoA prosthetic group into its acetyl thioester using the energy from the hydrolysis of ATP. The polypeptide is ACP-SH:acetate ligase (madH) (Malonomonas rubra).